We begin with the raw amino-acid sequence, 118 residues long: Small ribosomal subunit protein uS13 (118 aa).

Residues 94–118 are disordered; sequence GLPVRGQRTKTNARTRKGPRKPIKK.

This sequence belongs to the universal ribosomal protein uS13 family. As to quaternary structure, part of the 30S ribosomal subunit. Forms a loose heterodimer with protein S19. Forms two bridges to the 50S subunit in the 70S ribosome.

Located at the top of the head of the 30S subunit, it contacts several helices of the 16S rRNA. In the 70S ribosome it contacts the 23S rRNA (bridge B1a) and protein L5 of the 50S subunit (bridge B1b), connecting the 2 subunits; these bridges are implicated in subunit movement. Contacts the tRNAs in the A and P-sites. The protein is Small ribosomal subunit protein uS13 of Klebsiella pneumoniae (strain 342).